A 288-amino-acid chain; its full sequence is Bifunctional protein FolD (288 aa).

NADP(+) is bound by residues G166–S168 and I232.

It belongs to the tetrahydrofolate dehydrogenase/cyclohydrolase family. In terms of assembly, homodimer.

It catalyses the reaction (6R)-5,10-methylene-5,6,7,8-tetrahydrofolate + NADP(+) = (6R)-5,10-methenyltetrahydrofolate + NADPH. The catalysed reaction is (6R)-5,10-methenyltetrahydrofolate + H2O = (6R)-10-formyltetrahydrofolate + H(+). It participates in one-carbon metabolism; tetrahydrofolate interconversion. Catalyzes the oxidation of 5,10-methylenetetrahydrofolate to 5,10-methenyltetrahydrofolate and then the hydrolysis of 5,10-methenyltetrahydrofolate to 10-formyltetrahydrofolate. In Yersinia pseudotuberculosis serotype O:1b (strain IP 31758), this protein is Bifunctional protein FolD.